The sequence spans 235 residues: Orotidine 5'-phosphate decarboxylase (235 aa).

Substrate contacts are provided by residues aspartate 17, lysine 39, 66 to 75, threonine 121, arginine 182, glutamine 191, glycine 211, and arginine 212; that span reads DLKLHDIGNT. The active-site Proton donor is the lysine 68.

This sequence belongs to the OMP decarboxylase family. Type 1 subfamily. In terms of assembly, homodimer.

It carries out the reaction orotidine 5'-phosphate + H(+) = UMP + CO2. It functions in the pathway pyrimidine metabolism; UMP biosynthesis via de novo pathway; UMP from orotate: step 2/2. Catalyzes the decarboxylation of orotidine 5'-monophosphate (OMP) to uridine 5'-monophosphate (UMP). The polypeptide is Orotidine 5'-phosphate decarboxylase (Afipia carboxidovorans (strain ATCC 49405 / DSM 1227 / KCTC 32145 / OM5) (Oligotropha carboxidovorans)).